A 67-amino-acid chain; its full sequence is UPF0337 protein BCE_3655 (67 aa).

This sequence belongs to the UPF0337 (CsbD) family.

The protein is UPF0337 protein BCE_3655 of Bacillus cereus (strain ATCC 10987 / NRS 248).